The chain runs to 388 residues: MKHLHRFFSSDASGGIILIIAAVLAMLMANSGFTSGWYHAFLETPVQLRVGALEINKNMLLWINDALMAVFFLLIGLEVKRELMQGSLASLRQAAFPVIAAIGGMIVPALLYLAFNYSDPITREGWAIPAATDIAFALGVLALLGSRVPLALKIFLMALAIIDDLGAIVIIALFYTSDLSMVSLGVAAFAIVLLAVLNLCDVRRTGVYILVGVVLWTAVLKSGVHATLAGVIVGFFIPLKEKHGRSPAKRLEHVLHPWVAYLILPLFAFANAGVSLQGVTLDGLTSILPLGIIAGLLIGKPLGISLFCWLALRLKLAKLPEGTRFQQIMAVGILCGIGFTMSIFIASLAFGSVDPALINWAKLGILIGSLLSAVIGYSWLRTRLSPVV.

11 consecutive transmembrane segments (helical) span residues Gly-14–Thr-34, Met-59–Val-79, Ala-95–Phe-115, Gly-125–Gly-145, Ile-154–Phe-174, Leu-179–Leu-199, Val-219–Leu-239, Val-254–Val-274, Ile-287–Phe-307, Ile-328–Leu-348, and Ala-356–Gly-376.

Belongs to the NhaA Na(+)/H(+) (TC 2.A.33) antiporter family.

The protein resides in the cell inner membrane. The enzyme catalyses Na(+)(in) + 2 H(+)(out) = Na(+)(out) + 2 H(+)(in). Its function is as follows. Na(+)/H(+) antiporter that extrudes sodium in exchange for external protons. The polypeptide is Na(+)/H(+) antiporter NhaA (Citrobacter koseri (strain ATCC BAA-895 / CDC 4225-83 / SGSC4696)).